The following is a 614-amino-acid chain: Major facilitator superfamily domain-containing protein 6-like protein B (614 aa).

Transmembrane regions (helical) follow at residues 41–61 (LGLG…VHLL) and 78–98 (FFIM…AFYP). Residues 177–191 (HQRFTDQFPSSSPLT) show a composition bias toward polar residues. The disordered stretch occupies residues 177 to 243 (HQRFTDQFPS…PFATHPNVSH (67 aa)). Residues 205-227 (GSGKAQKANSSKSSASNSKQRSS) are compositionally biased toward low complexity. A run of 9 helical transmembrane segments spans residues 270–290 (IFLI…PLEW), 312–332 (LWIW…FLID), 345–365 (VSFH…LSTL), 393–413 (IVLT…IQNF), 425–445 (ELYM…LYFF), 457–477 (WMVV…SFLW), 480–500 (WSVV…WWAI), 520–540 (LRWL…GFII), and 546–566 (AVLY…FLLV).

Belongs to the major facilitator superfamily. MFSD6 family.

The protein localises to the membrane. This Xenopus laevis (African clawed frog) protein is Major facilitator superfamily domain-containing protein 6-like protein B (mfsd6l-b).